A 102-amino-acid polypeptide reads, in one-letter code: Protein PAPPAS (102 aa).

Transmembrane regions (helical) follow at residues 13 to 33 (LFLT…FVKW) and 82 to 102 (IGSD…FFFF).

Expressed in placenta with lower expression in brain, kidney and testis.

The protein resides in the endoplasmic reticulum membrane. The polypeptide is Protein PAPPAS (PAPPA-AS1) (Homo sapiens (Human)).